A 200-amino-acid chain; its full sequence is 3-isopropylmalate dehydratase small subunit (200 aa).

The protein belongs to the LeuD family. LeuD type 1 subfamily. In terms of assembly, heterodimer of LeuC and LeuD.

It carries out the reaction (2R,3S)-3-isopropylmalate = (2S)-2-isopropylmalate. It functions in the pathway amino-acid biosynthesis; L-leucine biosynthesis; L-leucine from 3-methyl-2-oxobutanoate: step 2/4. In terms of biological role, catalyzes the isomerization between 2-isopropylmalate and 3-isopropylmalate, via the formation of 2-isopropylmaleate. The polypeptide is 3-isopropylmalate dehydratase small subunit (Photobacterium profundum (strain SS9)).